The following is a 311-amino-acid chain: Malate dehydrogenase (311 aa).

Residues 7-13 (GAAGGIG) and Asp34 contribute to the NAD(+) site. Residues Arg81 and Arg87 each coordinate substrate. Residues Asn94 and 117 to 119 (ITN) contribute to the NAD(+) site. Positions 119 and 153 each coordinate substrate. The Proton acceptor role is filled by His177. Met227 serves as a coordination point for NAD(+).

This sequence belongs to the LDH/MDH superfamily. MDH type 1 family. In terms of assembly, homodimer.

It carries out the reaction (S)-malate + NAD(+) = oxaloacetate + NADH + H(+). Its function is as follows. Catalyzes the reversible oxidation of malate to oxaloacetate. This chain is Malate dehydrogenase, found in Shewanella loihica (strain ATCC BAA-1088 / PV-4).